Consider the following 202-residue polypeptide: uncharacterized protein (202 aa).

2 disordered regions span residues 1 to 32 and 46 to 95; these read MRPE…ASLG and PSSV…PSYT. The segment covering 47–79 has biased composition (low complexity); it reads SSVSLSSSSSRRSMPSLGSSRSSSLPSTGSLRS.

This is an uncharacterized protein from Equus caballus (Horse).